The following is a 711-amino-acid chain: Ferric reductase transmembrane component 3 (711 aa).

The N-terminal stretch at 1 to 20 (MYWVLLCGSILLCCLSGASA) is a signal peptide. The Extracellular portion of the chain corresponds to 21–166 (SPAKTKMYGK…YANYDIGHTY (146 aa)). 4 N-linked (GlcNAc...) asparagine glycosylation sites follow: Asn-85, Asn-108, Asn-120, and Asn-134. Residues 167–187 (GGIICAYFVGVMILASILHYL) form a helical membrane-spanning segment. Topologically, residues 188–237 (SYTPFKTALFKQRLVRYVRRYLTIPTIWGKHASSFSYLKIFTGFLPTRSE) are cytoplasmic. The chain crosses the membrane as a helical span at residues 238–258 (GVIILGYLVLHTVFLAYGYQY). Topologically, residues 259–280 (DPYNLIFDSRREQIARYVADRS) are extracellular. One can recognise a Ferric oxidoreductase domain in the interval 280–414 (SGVLAFAHFP…SGIEWIYAAI (135 aa)). The chain crosses the membrane as a helical span at residues 281-301 (GVLAFAHFPLIALFAGRNNFL). The Cytoplasmic segment spans residues 302–321 (EFISGVKYTSFIMFHKWLGR). Heme is bound by residues His-316 and His-330. The chain crosses the membrane as a helical span at residues 322–341 (MMFLDAVIHGAAYTSYSVFY). The Extracellular portion of the chain corresponds to 342–353 (KDWAASKEETYW). Residues 354–374 (QFGVAALCIVGVMVFFSLAMF) form a helical membrane-spanning segment. The Cytoplasmic portion of the chain corresponds to 375 to 376 (RK). A helical transmembrane segment spans residues 377–397 (FFYEAFLFLHIVLGALFFYTC). His-386 contributes to the heme binding site. Residue Trp-398 is a topological domain, extracellular. A helical membrane pass occupies residues 399 to 419 (EHVVELSGIEWIYAAIAIWTI). His-400 is a binding site for heme. An FAD-binding FR-type domain is found at 415–534 (AIWTIDRLIR…EGPYGSSSPV (120 aa)). Over 420 to 711 (DRLIRIVRVS…IEYFEEYQSW (292 aa)) the chain is Cytoplasmic. 479 to 485 (HPFTVLD) contacts FAD. Residues 526–529 (GPYG) and 677–678 (CG) contribute to the NADP(+) site.

This sequence belongs to the ferric reductase (FRE) family. The cofactor is FAD. Requires heme as cofactor.

The protein localises to the cell membrane. It catalyses the reaction 2 a Fe(II)-siderophore + NADP(+) + H(+) = 2 a Fe(III)-siderophore + NADPH. Its function is as follows. Siderophore-iron reductase responsible for reducing extracellular iron prior to import. Catalyzes the reductive uptake of Fe(3+) bound to di- and trihydroxamate siderophores. Fe(3+) is reduced to Fe(2+), which then dissociates from the siderophore and can be imported by the high-affinity Fe(2+) transport complex in the plasma membrane. This Saccharomyces cerevisiae (strain ATCC 204508 / S288c) (Baker's yeast) protein is Ferric reductase transmembrane component 3 (FRE3).